Here is a 282-residue protein sequence, read N- to C-terminus: MNPISQFVREYLLAVQFFTRIPVVGRLADWVGYSPELLRASAGHFPGVGILVGVMAALVYGLIQALLPNTPFTPLVAAVLSTAATVLLTGGFHEDGLADVADGLGGSQDRERALEIMKDSRVGAFGAMALMLALLGKTALLAMLGSVDVSPAELGDDASFSSWYIGAALLTGHVVSRGLPLLLIWLLPHVGNTASSKSKPLADQISQGSLLVAFIWSFVVLALAGLALDAISLIVACSFSLLALLWMGALFKRRLQGFTGDCLGATQQVCEIAFYLGLAVSL.

6 helical membrane passes run 47–67 (GVGILVGVMAALVYGLIQALL), 72–92 (FTPLVAAVLSTAATVLLTGGF), 124–144 (AFGAMALMLALLGKTALLAML), 167–187 (AALLTGHVVSRGLPLLLIWLL), 208–228 (GSLLVAFIWSFVVLALAGLAL), and 231–251 (ISLIVACSFSLLALLWMGALF).

It belongs to the CobS family. Mg(2+) is required as a cofactor.

It localises to the cell inner membrane. It carries out the reaction alpha-ribazole + adenosylcob(III)inamide-GDP = adenosylcob(III)alamin + GMP + H(+). It catalyses the reaction alpha-ribazole 5'-phosphate + adenosylcob(III)inamide-GDP = adenosylcob(III)alamin 5'-phosphate + GMP + H(+). It participates in cofactor biosynthesis; adenosylcobalamin biosynthesis; adenosylcobalamin from cob(II)yrinate a,c-diamide: step 7/7. Functionally, joins adenosylcobinamide-GDP and alpha-ribazole to generate adenosylcobalamin (Ado-cobalamin). Also synthesizes adenosylcobalamin 5'-phosphate from adenosylcobinamide-GDP and alpha-ribazole 5'-phosphate. The polypeptide is Adenosylcobinamide-GDP ribazoletransferase (Polaromonas sp. (strain JS666 / ATCC BAA-500)).